We begin with the raw amino-acid sequence, 489 residues long: Glycogen synthase (489 aa).

Position 20 (R20) interacts with ADP-alpha-D-glucose.

Belongs to the glycosyltransferase 1 family. Bacterial/plant glycogen synthase subfamily.

The catalysed reaction is [(1-&gt;4)-alpha-D-glucosyl](n) + ADP-alpha-D-glucose = [(1-&gt;4)-alpha-D-glucosyl](n+1) + ADP + H(+). It participates in glycan biosynthesis; glycogen biosynthesis. Functionally, synthesizes alpha-1,4-glucan chains using ADP-glucose. In Chlorobium phaeobacteroides (strain DSM 266 / SMG 266 / 2430), this protein is Glycogen synthase.